A 504-amino-acid polypeptide reads, in one-letter code: uncharacterized protein (504 aa).

This is an uncharacterized protein from Klebsiella pneumoniae.